The primary structure comprises 78 residues: MSRVCQVTGKRPQVGNNVSHAHNKTRRRFLPNLHNHRFWVESENRFVRLRVSTKGMRIIDKHGIDKVLADLRAKGEKV.

The protein belongs to the bacterial ribosomal protein bL28 family.

This chain is Large ribosomal subunit protein bL28, found in Psychrobacter sp. (strain PRwf-1).